Consider the following 440-residue polypeptide: Ribosomal protein uS12 methylthiotransferase RimO (440 aa).

An MTTase N-terminal domain is found at 7 to 117; sequence PKISFVSLGC…VLDAVHRALP (111 aa). Cysteine 16, cysteine 52, cysteine 81, cysteine 148, cysteine 152, and cysteine 155 together coordinate [4Fe-4S] cluster. The region spanning 134–370 is the Radical SAM core domain; it reads LTPRHYAYLK…MARQQKISAQ (237 aa). The TRAM domain maps to 373-439; it reads KRKVGTRQQV…EYDLHGSVAG (67 aa).

The protein belongs to the methylthiotransferase family. RimO subfamily. [4Fe-4S] cluster serves as cofactor.

The protein resides in the cytoplasm. It catalyses the reaction L-aspartate(89)-[ribosomal protein uS12]-hydrogen + (sulfur carrier)-SH + AH2 + 2 S-adenosyl-L-methionine = 3-methylsulfanyl-L-aspartate(89)-[ribosomal protein uS12]-hydrogen + (sulfur carrier)-H + 5'-deoxyadenosine + L-methionine + A + S-adenosyl-L-homocysteine + 2 H(+). In terms of biological role, catalyzes the methylthiolation of an aspartic acid residue of ribosomal protein uS12. The polypeptide is Ribosomal protein uS12 methylthiotransferase RimO (Afipia carboxidovorans (strain ATCC 49405 / DSM 1227 / KCTC 32145 / OM5) (Oligotropha carboxidovorans)).